The primary structure comprises 393 residues: Putative acid--amine ligase HI_0929 (393 aa).

103–105 is a binding site for ATP; that stretch reads RFD. Residues Asp105, Glu117, and Asn119 each coordinate Mg(2+). Residues Lys267, Lys303, Gly310, Gln343, and 378–380 contribute to the ATP site; that span reads AVT.

The protein belongs to the glutathionylspermidine synthase preATP-grasp family.

May be a ligase forming an amide bond. Shows ATPase activity. The protein is Putative acid--amine ligase HI_0929 of Haemophilus influenzae (strain ATCC 51907 / DSM 11121 / KW20 / Rd).